We begin with the raw amino-acid sequence, 185 residues long: Transcription termination/antitermination protein NusG (185 aa).

Residues 134-164 (VGKRVRIVDGAFSGFEAPITEINGDKLTLTV) enclose the KOW domain.

This sequence belongs to the NusG family.

Participates in transcription elongation, termination and antitermination. The sequence is that of Transcription termination/antitermination protein NusG from Lactococcus lactis subsp. lactis (strain IL1403) (Streptococcus lactis).